The primary structure comprises 358 residues: Dual-specificity RNA methyltransferase RlmN (358 aa).

E91 acts as the Proton acceptor in catalysis. Residues 102 to 337 (GNIRITQCLS…TILRKSKGQD (236 aa)) enclose the Radical SAM core domain. C109 and C342 are disulfide-bonded. Residues C116, C120, and C123 each coordinate [4Fe-4S] cluster. Residues 169-170 (GE), S201, 223-225 (SLH), and N299 contribute to the S-adenosyl-L-methionine site. Catalysis depends on C342, which acts as the S-methylcysteine intermediate.

This sequence belongs to the radical SAM superfamily. RlmN family. It depends on [4Fe-4S] cluster as a cofactor.

It localises to the cytoplasm. The catalysed reaction is adenosine(2503) in 23S rRNA + 2 reduced [2Fe-2S]-[ferredoxin] + 2 S-adenosyl-L-methionine = 2-methyladenosine(2503) in 23S rRNA + 5'-deoxyadenosine + L-methionine + 2 oxidized [2Fe-2S]-[ferredoxin] + S-adenosyl-L-homocysteine. It catalyses the reaction adenosine(37) in tRNA + 2 reduced [2Fe-2S]-[ferredoxin] + 2 S-adenosyl-L-methionine = 2-methyladenosine(37) in tRNA + 5'-deoxyadenosine + L-methionine + 2 oxidized [2Fe-2S]-[ferredoxin] + S-adenosyl-L-homocysteine. In terms of biological role, specifically methylates position 2 of adenine 2503 in 23S rRNA and position 2 of adenine 37 in tRNAs. m2A2503 modification seems to play a crucial role in the proofreading step occurring at the peptidyl transferase center and thus would serve to optimize ribosomal fidelity. In Lawsonia intracellularis (strain PHE/MN1-00), this protein is Dual-specificity RNA methyltransferase RlmN.